Consider the following 397-residue polypeptide: CCA-adding enzyme (397 aa).

2 residues coordinate ATP: G27 and R30. Positions 27 and 30 each coordinate CTP. Residues D40 and D42 each coordinate Mg(2+). Residues R111, D154, R157, R160, and R163 each contribute to the ATP site. R111, D154, R157, R160, and R163 together coordinate CTP.

This sequence belongs to the tRNA nucleotidyltransferase/poly(A) polymerase family. Bacterial CCA-adding enzyme type 3 subfamily. Homodimer. Mg(2+) serves as cofactor.

The catalysed reaction is a tRNA precursor + 2 CTP + ATP = a tRNA with a 3' CCA end + 3 diphosphate. It carries out the reaction a tRNA with a 3' CCA end + 2 CTP + ATP = a tRNA with a 3' CCACCA end + 3 diphosphate. In terms of biological role, catalyzes the addition and repair of the essential 3'-terminal CCA sequence in tRNAs without using a nucleic acid template. Adds these three nucleotides in the order of C, C, and A to the tRNA nucleotide-73, using CTP and ATP as substrates and producing inorganic pyrophosphate. tRNA 3'-terminal CCA addition is required both for tRNA processing and repair. Also involved in tRNA surveillance by mediating tandem CCA addition to generate a CCACCA at the 3' terminus of unstable tRNAs. While stable tRNAs receive only 3'-terminal CCA, unstable tRNAs are marked with CCACCA and rapidly degraded. The chain is CCA-adding enzyme from Anoxybacillus flavithermus (strain DSM 21510 / WK1).